The sequence spans 161 residues: Cyclic pyranopterin monophosphate synthase (161 aa).

Residues 75–77 (MCH) and 115–116 (ME) contribute to the substrate site. D130 is an active-site residue.

The protein belongs to the MoaC family. As to quaternary structure, homohexamer; trimer of dimers.

It catalyses the reaction (8S)-3',8-cyclo-7,8-dihydroguanosine 5'-triphosphate = cyclic pyranopterin phosphate + diphosphate. It participates in cofactor biosynthesis; molybdopterin biosynthesis. In terms of biological role, catalyzes the conversion of (8S)-3',8-cyclo-7,8-dihydroguanosine 5'-triphosphate to cyclic pyranopterin monophosphate (cPMP). The chain is Cyclic pyranopterin monophosphate synthase from Bacillus cereus (strain ATCC 10987 / NRS 248).